The sequence spans 158 residues: MSIEGVLEQGFVTTKADQLINYMRTGSMWPMTFGLACCAVEMMQAGASRYDLDRFGIVFRPSPRQSDVMIVAGTLCNKMAPALRKVYDQMAEPRWVISMGSCANGGGYYHYSYSVVRGCDRIVPVDIYVPGCPPTAEALIFGIIQLQKKIRRTNTIAR.

The [4Fe-4S] cluster site is built by Cys-37, Cys-38, Cys-102, and Cys-132.

The protein belongs to the complex I 20 kDa subunit family. NDH-1 is composed of 14 different subunits. Subunits NuoB, C, D, E, F, and G constitute the peripheral sector of the complex. [4Fe-4S] cluster is required as a cofactor.

The protein resides in the cell inner membrane. The catalysed reaction is a quinone + NADH + 5 H(+)(in) = a quinol + NAD(+) + 4 H(+)(out). Functionally, NDH-1 shuttles electrons from NADH, via FMN and iron-sulfur (Fe-S) centers, to quinones in the respiratory chain. The immediate electron acceptor for the enzyme in this species is believed to be ubiquinone. Couples the redox reaction to proton translocation (for every two electrons transferred, four hydrogen ions are translocated across the cytoplasmic membrane), and thus conserves the redox energy in a proton gradient. This chain is NADH-quinone oxidoreductase subunit B, found in Thiobacillus denitrificans (strain ATCC 25259 / T1).